Consider the following 488-residue polypeptide: MQYRDLRDFIRGLEQRGELKRIQVPISPVLEMTEVCDRTLRAKGPALLFEKPTGFDIPVLGNLFGTPERVAMGMGAESVDELREIGKLLAFLKEPEPPKGLKDAWSKLPIFKKVVSMAPKVVKDAVCQEVVVEGDDVDLGALPIQHCWPGDVAPLITWGLTVTRGPNKDRQNLGIYRQQVIGRNKVIMRWLSHRGGALDYREWCEKNPGQPFPVAVALGADPATILGAVTPVPDTLSEYAFAGLLRGNRTELVKCRGSNLQVPATAEIILEGVIHPGEMAPEGPYGDHTGYYNEVDSFPVFTVERITHRHKPIYHSTYTGRPPDEPAILGVALNEVFVPILQKQFPEITDFYLPPEGCSYRMAVVTMKKQYPGHAKRVMLGVWSFLRQFMYTKFVIVTDDDINARDWNDVIWAITTRMDPKRDTVMIDNTPIDYLDFASPVSGLGSKMGLDATHKWPGETTREWGRVIVKDEAVTRRIDELWDQLGID.

A Mn(2+)-binding site is contributed by N172. Residues 175-177, 189-191, and 194-195 each bind prenylated FMN; these read IYR, RWL, and RG. E238 is a Mn(2+) binding site. Residue D287 is the Proton donor of the active site.

Belongs to the UbiD family. In terms of assembly, homohexamer. Prenylated FMN is required as a cofactor. The cofactor is Mn(2+).

It localises to the cell membrane. It carries out the reaction a 4-hydroxy-3-(all-trans-polyprenyl)benzoate + H(+) = a 2-(all-trans-polyprenyl)phenol + CO2. The protein operates within cofactor biosynthesis; ubiquinone biosynthesis. Its function is as follows. Catalyzes the decarboxylation of 3-octaprenyl-4-hydroxy benzoate to 2-octaprenylphenol, an intermediate step in ubiquinone biosynthesis. The protein is 3-octaprenyl-4-hydroxybenzoate carboxy-lyase of Pseudomonas putida (strain GB-1).